The chain runs to 450 residues: Sulfide:quinone oxidoreductase, mitochondrial (450 aa).

FAD is bound by residues 53–54, glutamate 75, glutamine 83, and valine 118; that span reads SG. The residue at position 173 (lysine 173) is an N6-acetyllysine. The active-site Cysteine persulfide intermediate is cysteine 201. A disulfide bridge connects residues cysteine 201 and cysteine 379. FAD is bound at residue aspartate 336. Serine 343 carries the phosphoserine modification. 344–347 lines the FAD pocket; it reads KTAA. Cysteine 379 functions as the Cysteine persulfide intermediate in the catalytic mechanism.

The protein belongs to the SQRD family. FAD is required as a cofactor.

Its subcellular location is the mitochondrion. It catalyses the reaction ubiquinone-10 + hydrogen sulfide + sulfite + 2 H(+) = ubiquinol-10 + thiosulfate. It carries out the reaction a quinone + hydrogen sulfide + glutathione + H(+) = S-sulfanylglutathione + a quinol. The catalysed reaction is ubiquinone-10 + hydrogen sulfide + glutathione + H(+) = S-sulfanylglutathione + ubiquinol-10. Catalyzes the oxidation of hydrogen sulfide with the help of a quinone, such as ubiquinone-10, giving rise to thiosulfate and ultimately to sulfane (molecular sulfur) atoms. Requires an additional electron acceptor; can use sulfite, sulfide or cyanide (in vitro). It is believed the in vivo electron acceptor is glutathione. In Homo sapiens (Human), this protein is Sulfide:quinone oxidoreductase, mitochondrial.